Here is a 267-residue protein sequence, read N- to C-terminus: Cytokinesis defective protein 7 (267 aa).

The interval 244–267 (RNQADQSILPPSGDQQHHRSELHA) is disordered. Residues 258–267 (QQHHRSELHA) show a composition bias toward basic and acidic residues.

This Caenorhabditis elegans protein is Cytokinesis defective protein 7.